We begin with the raw amino-acid sequence, 346 residues long: Queuosine 5'-phosphate N-glycosylase/hydrolase (346 aa).

Residues His49, Phe243, Asp245, Asp310, and Asp315 each contribute to the queuine site. Catalysis depends on Asp245, which acts as the Nucleophile or transition state stabilizer.

It belongs to the QNG1 protein family.

The catalysed reaction is queuosine 5'-phosphate + H2O = queuine + D-ribose 5-phosphate. Its function is as follows. Catalyzes the hydrolysis of queuosine 5'-phosphate, releasing the nucleobase queuine (q). Is required for salvage of queuine from exogenous queuosine (Q) that is imported and then converted to queuosine 5'-phosphate intracellularly. The sequence is that of Queuosine 5'-phosphate N-glycosylase/hydrolase from Schizosaccharomyces pombe (strain 972 / ATCC 24843) (Fission yeast).